Consider the following 32-residue polypeptide: Cytochrome b6-f complex subunit 7 (32 aa).

A helical membrane pass occupies residues 9–27; it reads AAVFWILIPIGLVGGALLL.

The protein belongs to the PetM family. As to quaternary structure, the 4 large subunits of the cytochrome b6-f complex are cytochrome b6, subunit IV (17 kDa polypeptide, PetD), cytochrome f and the Rieske protein, while the 4 small subunits are PetG, PetL, PetM and PetN. The complex functions as a dimer.

The protein resides in the cellular thylakoid membrane. In terms of biological role, component of the cytochrome b6-f complex, which mediates electron transfer between photosystem II (PSII) and photosystem I (PSI), cyclic electron flow around PSI, and state transitions. The polypeptide is Cytochrome b6-f complex subunit 7 (Prochlorococcus marinus (strain MIT 9301)).